Here is a 163-residue protein sequence, read N- to C-terminus: UPF0262 protein RPE_4483 (163 aa).

Belongs to the UPF0262 family.

In Rhodopseudomonas palustris (strain BisA53), this protein is UPF0262 protein RPE_4483.